A 411-amino-acid polypeptide reads, in one-letter code: Dipeptidase 1 (411 aa).

Positions 1 to 16 are cleaved as a signal peptide; sequence MWSGWWLWPLVAVCTA. Zn(2+)-binding residues include H36 and D38. N57 carries an N-linked (GlcNAc...) asparagine glycan. C87 and C170 are oxidised to a cystine. E141 provides a ligand contact to Zn(2+). H168 is a substrate binding site. Residues H214 and H235 each coordinate Zn(2+). C242 and C274 form a disulfide bridge. R246 is a substrate binding site. N-linked (GlcNAc...) asparagine glycosylation occurs at N279. Residue D304 coordinates substrate. N-linked (GlcNAc...) asparagine glycans are attached at residues N332 and N358. S385 is lipidated: GPI-anchor amidated serine. A propeptide spans 386 to 411 (removed in mature form); the sequence is GASSLHRHWGLLLASLAPLVLCLSLL.

Belongs to the metallo-dependent hydrolases superfamily. Peptidase M19 family. As to quaternary structure, homodimer; disulfide-linked. Zn(2+) is required as a cofactor. As to expression, expressed in lung and kidneys.

It localises to the apical cell membrane. The protein resides in the cell projection. The protein localises to the microvillus membrane. It catalyses the reaction an L-aminoacyl-L-amino acid + H2O = 2 an L-alpha-amino acid. The enzyme catalyses leukotriene D4 + H2O = leukotriene E4 + glycine. The catalysed reaction is a beta-lactam + H2O = a substituted beta-amino acid. It carries out the reaction L-cystine-bis-glycine + 2 H2O = L-cystine + 2 glycine. It catalyses the reaction glycyldehydrophenylalanine + H2O = 2,3-didehydrophenylalanine + glycine. With respect to regulation, inhibited by L-penicillamine. Beta-lactamase activity is inhibited by cilastatin. Its function is as follows. Hydrolyzes a wide range of dipeptides including the conversion of leukotriene D4 to leukotriene E4. Hydrolyzes cystinyl-bis-glycine (cys-bis-gly) formed during glutathione degradation. Also possesses beta lactamase activity and can hydrolyze the beta-lactam antibiotic imipenem. Independently of its dipeptidase activity, acts as an adhesion receptor for neutrophil recruitment from bloodstream into inflamed lungs and liver. The protein is Dipeptidase 1 (DPEP1) of Homo sapiens (Human).